Consider the following 389-residue polypeptide: Alanine racemase (389 aa).

Lys46 functions as the Proton acceptor; specific for D-alanine in the catalytic mechanism. Lys46 bears the N6-(pyridoxal phosphate)lysine mark. Arg144 contributes to the substrate binding site. The active-site Proton acceptor; specific for L-alanine is Tyr275. Met323 serves as a coordination point for substrate.

The protein belongs to the alanine racemase family. Requires pyridoxal 5'-phosphate as cofactor.

The enzyme catalyses L-alanine = D-alanine. The protein operates within amino-acid biosynthesis; D-alanine biosynthesis; D-alanine from L-alanine: step 1/1. Its function is as follows. Catalyzes the interconversion of L-alanine and D-alanine. May also act on other amino acids. In Mycolicibacterium smegmatis (strain ATCC 700084 / mc(2)155) (Mycobacterium smegmatis), this protein is Alanine racemase (alr).